Here is a 297-residue protein sequence, read N- to C-terminus: Transmembrane protein 178A (297 aa).

The N-terminal stretch at 1 to 25 is a signal peptide; sequence MEPRALVTALSLGLSLCSLGLLVTA. Over 26 to 179 the chain is Extracellular; that stretch reads IFTDHWYETD…LLHLRRITAG (154 aa). Basic and acidic residues predominate over residues 41–57; that stretch reads ESCERSRAGADPPDQKN. Residues 41 to 86 are disordered; that stretch reads ESCERSRAGADPPDQKNRLMPLSHLPLRDSPPLGRRLLPGGPGRSD. Positions 68–79 are enriched in low complexity; it reads RDSPPLGRRLLP. Asn-158 is a glycosylation site (N-linked (GlcNAc...) asparagine). A helical membrane pass occupies residues 180–200; that stretch reads FLGMAVAVLLCGCIVATVSFF. The Cytoplasmic portion of the chain corresponds to 201-208; sequence WEESLTQH. The helical transmembrane segment at 209–229 threads the bilayer; sequence VAGLLFLMTGIFCTISLCTYA. The Extracellular portion of the chain corresponds to 230–257; sequence ASVSYDLNRVPKLIYSLPHDVEHGYSWS. Residues 258–278 traverse the membrane as a helical segment; that stretch reads IFCAWCSLGFIVAAGGLCIAY. Residues 279 to 297 are Cytoplasmic-facing; it reads PFISRTKIAHLKSGRDSTV.

This sequence belongs to the TMEM178 family. In terms of assembly, interacts with STIM1. In terms of tissue distribution, highly expressed in the bone and its expression increases during osteoclastogenesis.

Its subcellular location is the endoplasmic reticulum membrane. Acts as a negative regulator of osteoclast differentiation in basal and inflammatory conditions by regulating TNFSF11-induced Ca (2+) fluxes, thereby controlling the induction of NFATC1. This Mus musculus (Mouse) protein is Transmembrane protein 178A (Tmem178a).